Reading from the N-terminus, the 290-residue chain is Ribosomal RNA small subunit methyltransferase A (290 aa).

S-adenosyl-L-methionine-binding residues include N27, L29, G54, E75, D100, and N125.

The protein belongs to the class I-like SAM-binding methyltransferase superfamily. rRNA adenine N(6)-methyltransferase family. RsmA subfamily.

The protein resides in the cytoplasm. It carries out the reaction adenosine(1518)/adenosine(1519) in 16S rRNA + 4 S-adenosyl-L-methionine = N(6)-dimethyladenosine(1518)/N(6)-dimethyladenosine(1519) in 16S rRNA + 4 S-adenosyl-L-homocysteine + 4 H(+). Functionally, specifically dimethylates two adjacent adenosines (A1518 and A1519) in the loop of a conserved hairpin near the 3'-end of 16S rRNA in the 30S particle. May play a critical role in biogenesis of 30S subunits. The protein is Ribosomal RNA small subunit methyltransferase A of Streptococcus uberis (strain ATCC BAA-854 / 0140J).